A 1208-amino-acid chain; its full sequence is DNA-directed RNA polymerase subunit beta (1208 aa).

Belongs to the RNA polymerase beta chain family. The RNAP catalytic core consists of 2 alpha, 1 beta, 1 beta' and 1 omega subunit. When a sigma factor is associated with the core the holoenzyme is formed, which can initiate transcription.

The catalysed reaction is RNA(n) + a ribonucleoside 5'-triphosphate = RNA(n+1) + diphosphate. Its function is as follows. DNA-dependent RNA polymerase catalyzes the transcription of DNA into RNA using the four ribonucleoside triphosphates as substrates. In Enterococcus faecium (Streptococcus faecium), this protein is DNA-directed RNA polymerase subunit beta.